We begin with the raw amino-acid sequence, 479 residues long: Ribulose bisphosphate carboxylase large chain (479 aa).

The propeptide occupies 1-2 (MS). Substrate is bound by residues Asn123 and Thr173. Catalysis depends on Lys175, which acts as the Proton acceptor. Residue Lys177 participates in substrate binding. Positions 201, 203, and 204 each coordinate Mg(2+). Lys201 carries the N6-carboxylysine modification. Ser208 carries the phosphoserine modification. The Proton acceptor role is filled by His294. Residues Arg295 and His327 each coordinate substrate. Phosphothreonine is present on Thr330. Ser379 provides a ligand contact to substrate.

Belongs to the RuBisCO large chain family. Type I subfamily. In terms of assembly, heterohexadecamer of 8 large chains and 8 small chains; disulfide-linked. The disulfide link is formed within the large subunit homodimers. The cofactor is Mg(2+). In terms of processing, the disulfide bond which can form in the large chain dimeric partners within the hexadecamer appears to be associated with oxidative stress and protein turnover.

It is found in the plastid. The protein localises to the chloroplast. It carries out the reaction 2 (2R)-3-phosphoglycerate + 2 H(+) = D-ribulose 1,5-bisphosphate + CO2 + H2O. The catalysed reaction is D-ribulose 1,5-bisphosphate + O2 = 2-phosphoglycolate + (2R)-3-phosphoglycerate + 2 H(+). Functionally, ruBisCO catalyzes two reactions: the carboxylation of D-ribulose 1,5-bisphosphate, the primary event in carbon dioxide fixation, as well as the oxidative fragmentation of the pentose substrate in the photorespiration process. Both reactions occur simultaneously and in competition at the same active site. In Capsella bursa-pastoris (Shepherd's purse), this protein is Ribulose bisphosphate carboxylase large chain.